The chain runs to 439 residues: Putative FBD-associated F-box protein At1g05080 (439 aa).

An F-box domain is found at 12 to 58 (EDRISVLPEDLLVVILDLLPTKDVVATMILSKRWLSIWTMVRTLEYT). The 51-residue stretch at 360-410 (SWKQPSHVPECLSSQLEIFEWRDYGDRIIEEEFLTYVLANSKRLKTATISL) folds into the FBD domain.

This is Putative FBD-associated F-box protein At1g05080 from Arabidopsis thaliana (Mouse-ear cress).